Reading from the N-terminus, the 208-residue chain is ATP-dependent Clp protease proteolytic subunit (208 aa).

Ser-112 serves as the catalytic Nucleophile. Residue His-137 is part of the active site.

This sequence belongs to the peptidase S14 family. Fourteen ClpP subunits assemble into 2 heptameric rings which stack back to back to give a disk-like structure with a central cavity, resembling the structure of eukaryotic proteasomes.

It localises to the cytoplasm. The enzyme catalyses Hydrolysis of proteins to small peptides in the presence of ATP and magnesium. alpha-casein is the usual test substrate. In the absence of ATP, only oligopeptides shorter than five residues are hydrolyzed (such as succinyl-Leu-Tyr-|-NHMec, and Leu-Tyr-Leu-|-Tyr-Trp, in which cleavage of the -Tyr-|-Leu- and -Tyr-|-Trp bonds also occurs).. In terms of biological role, cleaves peptides in various proteins in a process that requires ATP hydrolysis. Has a chymotrypsin-like activity. Plays a major role in the degradation of misfolded proteins. The protein is ATP-dependent Clp protease proteolytic subunit of Buchnera aphidicola subsp. Acyrthosiphon pisum (strain APS) (Acyrthosiphon pisum symbiotic bacterium).